Consider the following 132-residue polypeptide: Fumarate reductase subunit C (132 aa).

3 helical membrane-spanning segments follow: residues 36 to 56, 70 to 90, and 110 to 130; these read AIPT…LGSL, IVII…VTYY, and IITM…LVFM.

This sequence belongs to the FrdC family. In terms of assembly, part of an enzyme complex containing four subunits: a flavoprotein (FrdA), an iron-sulfur protein (FrdB), and two hydrophobic anchor proteins (FrdC and FrdD).

The protein resides in the cell inner membrane. Functionally, anchors the catalytic components of the fumarate reductase complex to the cell membrane, binds quinones. The polypeptide is Fumarate reductase subunit C (Pasteurella multocida (strain Pm70)).